A 362-amino-acid polypeptide reads, in one-letter code: Alpha-tubulin N-acetyltransferase (362 aa).

The N-acetyltransferase domain occupies 1–177 (MQFGCNVAEA…NNFLMLDASI (177 aa)). Residues 111-124 (FYTH…GIGT) and 147-156 (SPKLLAFLSK) each bind acetyl-CoA.

The protein belongs to the acetyltransferase ATAT1 family.

It carries out the reaction L-lysyl-[alpha-tubulin] + acetyl-CoA = N(6)-acetyl-L-lysyl-[alpha-tubulin] + CoA + H(+). Specifically acetylates 'Lys-40' in alpha-tubulin on the lumenal side of microtubules. Promotes microtubule destabilization and accelerates microtubule dynamics; this activity may be independent of acetylation activity. Acetylates alpha-tubulin with a slow enzymatic rate, due to a catalytic site that is not optimized for acetyl transfer. Enters the microtubule through each end and diffuses quickly throughout the lumen of microtubules. Acetylates only long/old microtubules because of its slow acetylation rate since it does not have time to act on dynamically unstable microtubules before the enzyme is released. This is Alpha-tubulin N-acetyltransferase from Giardia intestinalis (strain ATCC 50803 / WB clone C6) (Giardia lamblia).